The sequence spans 223 residues: Ubiquitin-conjugating enzyme E2 S-A (223 aa).

In terms of domain architecture, UBC core spans 11–157; it reads HIIRLVYKEV…ARLLTEIHGG (147 aa). Catalysis depends on C95, which acts as the Glycyl thioester intermediate. Residues 170–223 form a disordered region; the sequence is QDLASGASASSADPMIPGVLGGAEGPMAKKHAGERDKKLAAKKKLDKKRALRRL. Over residues 209–223 the composition is skewed to basic residues; sequence AAKKKLDKKRALRRL.

Belongs to the ubiquitin-conjugating enzyme family.

It carries out the reaction S-ubiquitinyl-[E1 ubiquitin-activating enzyme]-L-cysteine + [E2 ubiquitin-conjugating enzyme]-L-cysteine = [E1 ubiquitin-activating enzyme]-L-cysteine + S-ubiquitinyl-[E2 ubiquitin-conjugating enzyme]-L-cysteine.. It functions in the pathway protein modification; protein ubiquitination. In terms of biological role, catalyzes the covalent attachment of ubiquitin to other proteins. Acts as an essential factor of the anaphase promoting complex/cyclosome (APC/C), a cell cycle-regulated ubiquitin ligase that controls progression through mitosis. Acts by specifically elongating 'Lys-11'-linked polyubiquitin chains initiated by the E2 enzyme ube2c/ubch10 on APC/C substrates, enhancing the degradation of APC/C substrates by the proteasome and promoting mitotic exit. This is Ubiquitin-conjugating enzyme E2 S-A (ube2s-a) from Xenopus laevis (African clawed frog).